The sequence spans 212 residues: Thymidylate kinase (212 aa).

An ATP-binding site is contributed by 11-18 (GPDGAGKS).

It belongs to the thymidylate kinase family.

It carries out the reaction dTMP + ATP = dTDP + ADP. Functionally, phosphorylation of dTMP to form dTDP in both de novo and salvage pathways of dTTP synthesis. The sequence is that of Thymidylate kinase from Streptococcus gordonii (strain Challis / ATCC 35105 / BCRC 15272 / CH1 / DL1 / V288).